Here is a 586-residue protein sequence, read N- to C-terminus: Arginine--tRNA ligase (586 aa).

The 'HIGH' region signature appears at 130–140; it reads ANPTGPMHVGH.

Belongs to the class-I aminoacyl-tRNA synthetase family. In terms of assembly, monomer.

It is found in the cytoplasm. The enzyme catalyses tRNA(Arg) + L-arginine + ATP = L-arginyl-tRNA(Arg) + AMP + diphosphate. The protein is Arginine--tRNA ligase of Methylobacterium sp. (strain 4-46).